The chain runs to 432 residues: Phosphomevalonate kinase (432 aa).

ATP is bound by residues lysine 10 and 142-148 (VEKTGLG).

Belongs to the GHMP kinase family. Mevalonate kinase subfamily.

It is found in the cytoplasm. It carries out the reaction (R)-5-phosphomevalonate + ATP = (R)-5-diphosphomevalonate + ADP. It participates in isoprenoid biosynthesis; isopentenyl diphosphate biosynthesis via mevalonate pathway; isopentenyl diphosphate from (R)-mevalonate: step 2/3. Functionally, phosphomevalonate kinase; part of the second module of ergosterol biosynthesis pathway that includes the middle steps of the pathway. ERG8 converts 5-phosphomevalonate to 5-diphosphomevalonate. The second module is carried out in the vacuole and involves the formation of farnesyl diphosphate, which is also an important intermediate in the biosynthesis of ubiquinone, dolichol, heme and prenylated proteins. Activity by the mevalonate kinase ERG12 first converts mevalonate into 5-phosphomevalonate. 5-phosphomevalonate is then further converted to 5-diphosphomevalonate by the phosphomevalonate kinase ERG8. The diphosphomevalonate decarboxylase MVD then produces isopentenyl diphosphate. The isopentenyl-diphosphate delta-isomerase IDI1 then catalyzes the 1,3-allylic rearrangement of the homoallylic substrate isopentenyl (IPP) to its highly electrophilic allylic isomer, dimethylallyl diphosphate (DMAPP). Finally the farnesyl diphosphate synthase ERG20 catalyzes the sequential condensation of isopentenyl pyrophosphate with dimethylallyl pyrophosphate, and then with the resultant geranylpyrophosphate to the ultimate product farnesyl pyrophosphate. The polypeptide is Phosphomevalonate kinase (Candida albicans (strain SC5314 / ATCC MYA-2876) (Yeast)).